The following is a 311-amino-acid chain: MSQPQNTFKLNDDIHHIPMIGLGTYNGAKVGEVGDAVKVALKSGYRHIDGAAIYMNEKEIGHALKEVFAEGEIKREDIFYVSKLWNSCHHASLVRKHCEKTLEDLGLEYLDLYLIHWPIAFENADPSGTTTQPLRDSDGEPVLAAVSIRETWQEMEKLVEYGLVKSIGVSNFNVQNLVDLLTYAKIKPAINQVEVHPYLSQPNLKYFCDRYGIVLTAYSPLGQGKCDLLSNETLKSIADKHNKTVANVIFKWLNQRGIVTIPKSSNPARIIENFNIFDFQLSNEDMDKINSLNSNLRTCTPANFCKIPLFD.

13–23 (DIHHIPMIGLG) is an NADP(+) binding site. Catalysis depends on tyrosine 54, which acts as the Proton donor. Histidine 116 serves as a coordination point for substrate. An NADP(+)-binding site is contributed by 219–273 (SPLGQGKCDLLSNETLKSIADKHNKTVANVIFKWLNQRGIVTIPKSSNPARIIEN).

Belongs to the aldo/keto reductase family.

The enzyme catalyses an alditol + NAD(+) = an aldose + NADH + H(+). It carries out the reaction an alditol + NADP(+) = an aldose + NADPH + H(+). Its function is as follows. Catalyzes the NADPH-dependent reduction of a wide variety of carbonyl-containing compounds to their corresponding alcohols with a broad range of catalytic efficiencies. This Dictyostelium discoideum (Social amoeba) protein is Aldose reductase B (alrB).